A 175-amino-acid chain; its full sequence is Peptide methionine sulfoxide reductase MsrA (175 aa).

Residue Cys-12 is part of the active site.

This sequence belongs to the MsrA Met sulfoxide reductase family.

It carries out the reaction L-methionyl-[protein] + [thioredoxin]-disulfide + H2O = L-methionyl-(S)-S-oxide-[protein] + [thioredoxin]-dithiol. The catalysed reaction is [thioredoxin]-disulfide + L-methionine + H2O = L-methionine (S)-S-oxide + [thioredoxin]-dithiol. Functionally, has an important function as a repair enzyme for proteins that have been inactivated by oxidation. Catalyzes the reversible oxidation-reduction of methionine sulfoxide in proteins to methionine. This is Peptide methionine sulfoxide reductase MsrA from Limosilactobacillus reuteri (strain DSM 20016) (Lactobacillus reuteri).